A 207-amino-acid chain; its full sequence is Guanylate kinase (207 aa).

Positions 6–185 (GLLIVLSGPS…AKNRIQCIVE (180 aa)) constitute a Guanylate kinase-like domain. Residue 13–20 (GPSGVGKG) coordinates ATP.

It belongs to the guanylate kinase family.

It is found in the cytoplasm. The enzyme catalyses GMP + ATP = GDP + ADP. In terms of biological role, essential for recycling GMP and indirectly, cGMP. This Staphylococcus aureus (strain Mu50 / ATCC 700699) protein is Guanylate kinase.